Here is a 506-residue protein sequence, read N- to C-terminus: Lysine--tRNA ligase (506 aa).

Mg(2+) contacts are provided by Glu411 and Glu418.

It belongs to the class-II aminoacyl-tRNA synthetase family. In terms of assembly, homodimer. Requires Mg(2+) as cofactor.

It localises to the cytoplasm. The catalysed reaction is tRNA(Lys) + L-lysine + ATP = L-lysyl-tRNA(Lys) + AMP + diphosphate. This Thermosynechococcus vestitus (strain NIES-2133 / IAM M-273 / BP-1) protein is Lysine--tRNA ligase.